A 269-amino-acid chain; its full sequence is Bis(5'-nucleosyl)-tetraphosphatase, symmetrical (269 aa).

Belongs to the Ap4A hydrolase family.

It carries out the reaction P(1),P(4)-bis(5'-adenosyl) tetraphosphate + H2O = 2 ADP + 2 H(+). Hydrolyzes diadenosine 5',5'''-P1,P4-tetraphosphate to yield ADP. In Vibrio vulnificus (strain YJ016), this protein is Bis(5'-nucleosyl)-tetraphosphatase, symmetrical.